We begin with the raw amino-acid sequence, 104 residues long: MQKIRRDDEIIVIAGKDKGKRGKVLKVLADDRLVVGGINLVKRHTKPNPMSGVQGGIVEKEAPMHASNVAIFNGATNKADRVGFKVEDGKKIRVFKSTQKAVDA.

This sequence belongs to the universal ribosomal protein uL24 family. Part of the 50S ribosomal subunit.

Its function is as follows. One of two assembly initiator proteins, it binds directly to the 5'-end of the 23S rRNA, where it nucleates assembly of the 50S subunit. In terms of biological role, one of the proteins that surrounds the polypeptide exit tunnel on the outside of the subunit. The sequence is that of Large ribosomal subunit protein uL24 from Pseudomonas syringae pv. syringae (strain B728a).